Consider the following 189-residue polypeptide: Glycerol-3-phosphate acyltransferase 1 (189 aa).

Transmembrane regions (helical) follow at residues 12-32 (MQFLYLVASYLFGNILTAYIV), 61-81 (GYFVATFLGDAIKGAIVVSIA), 88-108 (FTFVMLTLLAVIMGHIYPMLF), 124-144 (IAFDYLIALTLVAVFIIFYLI), and 164-184 (ILYSYSIVTTILSALIIVLIL).

It belongs to the PlsY family. As to quaternary structure, probably interacts with PlsX.

It localises to the cell membrane. The enzyme catalyses an acyl phosphate + sn-glycerol 3-phosphate = a 1-acyl-sn-glycero-3-phosphate + phosphate. The protein operates within lipid metabolism; phospholipid metabolism. In terms of biological role, catalyzes the transfer of an acyl group from acyl-phosphate (acyl-PO(4)) to glycerol-3-phosphate (G3P) to form lysophosphatidic acid (LPA). This enzyme utilizes acyl-phosphate as fatty acyl donor, but not acyl-CoA or acyl-ACP. This chain is Glycerol-3-phosphate acyltransferase 1, found in Bacillus anthracis.